We begin with the raw amino-acid sequence, 234 residues long: MHQLVLLRHGESVWNKENLFTGWTDVELSPRGEEESRNAGLLLKEHGFVFDLAFTSLLKRAIKTLWIVLEQMDLMWIPEHKEWRLNERHYGALQGLNKAQTAQEYGDEQVKLWRRSYKVRPPALAEGDQRHPSFDPRYHSLSRDLLPDTECLQDTVERVLPFWQQQAVPALQQGKRILIAAHGNSLRGLIKYLDQIPDDDIVGLEIPTGSPLVYELDRDLKPVRRYYLETGKAG.

Residues 8-15 (RHGESVWN), 21-22 (TG), R60, 87-90 (ERHY), K98, 114-115 (RR), and 183-184 (GN) contribute to the substrate site. H9 acts as the Tele-phosphohistidine intermediate in catalysis. The active-site Proton donor/acceptor is E87.

This sequence belongs to the phosphoglycerate mutase family. BPG-dependent PGAM subfamily. As to quaternary structure, homodimer.

It catalyses the reaction (2R)-2-phosphoglycerate = (2R)-3-phosphoglycerate. The protein operates within carbohydrate degradation; glycolysis; pyruvate from D-glyceraldehyde 3-phosphate: step 3/5. Its function is as follows. Catalyzes the interconversion of 2-phosphoglycerate and 3-phosphoglycerate. This chain is 2,3-bisphosphoglycerate-dependent phosphoglycerate mutase, found in Citrifermentans bemidjiense (strain ATCC BAA-1014 / DSM 16622 / JCM 12645 / Bem) (Geobacter bemidjiensis).